Consider the following 409-residue polypeptide: Pyrophosphate--fructose 6-phosphate 1-phosphotransferase (409 aa).

Gly14 is a binding site for diphosphate. Asp123 is a binding site for Mg(2+). Substrate-binding positions include 151 to 153 (TID), 196 to 198 (MGR), Glu268, and 325 to 328 (YFAR). The Proton acceptor role is filled by Asp153.

This sequence belongs to the phosphofructokinase type A (PFKA) family. PPi-dependent PFK group II subfamily. Clade 'P' sub-subfamily. Homotetramer. Mg(2+) is required as a cofactor.

It is found in the cytoplasm. The catalysed reaction is beta-D-fructose 6-phosphate + diphosphate = beta-D-fructose 1,6-bisphosphate + phosphate + H(+). It participates in carbohydrate degradation; glycolysis; D-glyceraldehyde 3-phosphate and glycerone phosphate from D-glucose: step 3/4. Non-allosteric. Its function is as follows. Catalyzes the phosphorylation of D-fructose 6-phosphate, the first committing step of glycolysis. Uses inorganic phosphate (PPi) as phosphoryl donor instead of ATP like common ATP-dependent phosphofructokinases (ATP-PFKs), which renders the reaction reversible, and can thus function both in glycolysis and gluconeogenesis. Consistently, PPi-PFK can replace the enzymes of both the forward (ATP-PFK) and reverse (fructose-bisphosphatase (FBPase)) reactions. The polypeptide is Pyrophosphate--fructose 6-phosphate 1-phosphotransferase (Methylotuvimicrobium alcaliphilum (strain DSM 19304 / NCIMB 14124 / VKM B-2133 / 20Z) (Methylomicrobium alcaliphilum)).